We begin with the raw amino-acid sequence, 605 residues long: DNA mismatch repair protein MutL (605 aa).

The protein belongs to the DNA mismatch repair MutL/HexB family.

Its function is as follows. This protein is involved in the repair of mismatches in DNA. It is required for dam-dependent methyl-directed DNA mismatch repair. May act as a 'molecular matchmaker', a protein that promotes the formation of a stable complex between two or more DNA-binding proteins in an ATP-dependent manner without itself being part of a final effector complex. This is DNA mismatch repair protein MutL from Methylocella silvestris (strain DSM 15510 / CIP 108128 / LMG 27833 / NCIMB 13906 / BL2).